Reading from the N-terminus, the 270-residue chain is DNA adenine methylase (270 aa).

S-adenosyl-L-methionine contacts are provided by Trp-10, Lys-14, Asp-54, and Asp-181.

The protein belongs to the N(4)/N(6)-methyltransferase family.

The catalysed reaction is a 2'-deoxyadenosine in DNA + S-adenosyl-L-methionine = an N(6)-methyl-2'-deoxyadenosine in DNA + S-adenosyl-L-homocysteine + H(+). Functionally, an alpha subtype methylase, recognizes the double-stranded sequence 5'-GATC-3' and methylates A-2. Overexpression leads to hypermutability. May be involved in methyl-directed DNA mismatch repair, initiation of chromosome replication and gene expression. The chain is DNA adenine methylase from Serratia marcescens.